The chain runs to 701 residues: ABC transporter G family member 23 (701 aa).

Positions 7 to 237 (INLNNVSRSY…YECSLLEDVY (231 aa)) constitute an ABC transporter domain. 39–46 (GSSGSGKT) is a binding site for ATP. 6 helical membrane passes run 335 to 355 (FPLV…FLAI), 493 to 513 (FLAP…FLSI), 541 to 561 (HILA…LIAV), 574 to 596 (LIYL…ISLI), 608 to 628 (LAIF…EAII), and 665 to 685 (LIII…STPI). An ABC transmembrane type-2 domain is found at 459–686 (FQKAFNKIAN…SLIVISTPIG (228 aa)).

Belongs to the ABC transporter superfamily. ABCG family.

Its subcellular location is the membrane. The polypeptide is ABC transporter G family member 23 (abcG23) (Dictyostelium discoideum (Social amoeba)).